The sequence spans 79 residues: Small ribosomal subunit protein bS18 (79 aa).

This sequence belongs to the bacterial ribosomal protein bS18 family. As to quaternary structure, part of the 30S ribosomal subunit. Forms a tight heterodimer with protein bS6.

Functionally, binds as a heterodimer with protein bS6 to the central domain of the 16S rRNA, where it helps stabilize the platform of the 30S subunit. This chain is Small ribosomal subunit protein bS18, found in Streptococcus pyogenes serotype M5 (strain Manfredo).